The following is a 123-amino-acid chain: Small ribosomal subunit protein uS12 (123 aa).

Residues 1–32 form a disordered region; sequence MPTINQLVRHGRKRSVKKTNTPALKASPQKRG. The residue at position 89 (Asp89) is a 3-methylthioaspartic acid.

Belongs to the universal ribosomal protein uS12 family. Part of the 30S ribosomal subunit. Contacts proteins S8 and S17. May interact with IF1 in the 30S initiation complex.

In terms of biological role, with S4 and S5 plays an important role in translational accuracy. Interacts with and stabilizes bases of the 16S rRNA that are involved in tRNA selection in the A site and with the mRNA backbone. Located at the interface of the 30S and 50S subunits, it traverses the body of the 30S subunit contacting proteins on the other side and probably holding the rRNA structure together. The combined cluster of proteins S8, S12 and S17 appears to hold together the shoulder and platform of the 30S subunit. The protein is Small ribosomal subunit protein uS12 of Desulfatibacillum aliphaticivorans.